Here is a 460-residue protein sequence, read N- to C-terminus: Kynurenine 3-monooxygenase (460 aa).

It belongs to the aromatic-ring hydroxylase family. KMO subfamily. It depends on FAD as a cofactor.

It is found in the mitochondrion. The catalysed reaction is L-kynurenine + NADPH + O2 + H(+) = 3-hydroxy-L-kynurenine + NADP(+) + H2O. Its pathway is cofactor biosynthesis; NAD(+) biosynthesis; quinolinate from L-kynurenine: step 1/3. In terms of biological role, catalyzes the hydroxylation of L-kynurenine (L-Kyn) to form 3-hydroxy-L-kynurenine (L-3OHKyn). Required for synthesis of quinolinic acid. The chain is Kynurenine 3-monooxygenase from Dictyostelium discoideum (Social amoeba).